The sequence spans 188 residues: Elongation factor P (188 aa).

Residue Lys-34 is modified to N6-(3,6-diaminohexanoyl)-5-hydroxylysine.

The protein belongs to the elongation factor P family. In terms of processing, may be beta-lysylated on the epsilon-amino group of Lys-34 by the combined action of EpmA and EpmB, and then hydroxylated on the C5 position of the same residue by EpmC (if this protein is present). Lysylation is critical for the stimulatory effect of EF-P on peptide-bond formation. The lysylation moiety may extend toward the peptidyltransferase center and stabilize the terminal 3-CCA end of the tRNA. Hydroxylation of the C5 position on Lys-34 may allow additional potential stabilizing hydrogen-bond interactions with the P-tRNA.

The protein localises to the cytoplasm. It participates in protein biosynthesis; polypeptide chain elongation. Its function is as follows. Involved in peptide bond synthesis. Alleviates ribosome stalling that occurs when 3 or more consecutive Pro residues or the sequence PPG is present in a protein, possibly by augmenting the peptidyl transferase activity of the ribosome. Modification of Lys-34 is required for alleviation. This Vibrio campbellii (strain ATCC BAA-1116) protein is Elongation factor P.